The sequence spans 340 residues: 4-hydroxy-2-oxovalerate aldolase (340 aa).

Residues 8–260 (VILHDMSLRD…HHGVNLYDIM (253 aa)) enclose the Pyruvate carboxyltransferase domain. Residue 16–17 (RD) participates in substrate binding. Residue aspartate 17 participates in Mn(2+) binding. The active-site Proton acceptor is histidine 20. The substrate site is built by serine 170 and histidine 199. Residues histidine 199 and histidine 201 each coordinate Mn(2+). Tyrosine 290 lines the substrate pocket.

It belongs to the 4-hydroxy-2-oxovalerate aldolase family.

The catalysed reaction is (S)-4-hydroxy-2-oxopentanoate = acetaldehyde + pyruvate. The polypeptide is 4-hydroxy-2-oxovalerate aldolase (Shewanella halifaxensis (strain HAW-EB4)).